Here is a 141-residue protein sequence, read N- to C-terminus: Large ribosomal subunit protein bL17 (141 aa).

This sequence belongs to the bacterial ribosomal protein bL17 family. Part of the 50S ribosomal subunit. Contacts protein L32.

The protein is Large ribosomal subunit protein bL17 of Sinorhizobium medicae (strain WSM419) (Ensifer medicae).